The sequence spans 56 residues: Large ribosomal subunit protein eL20 (56 aa).

The tract at residues 1 to 24 (MSTYTVRGSFPARDGPQQFEKEVE) is disordered.

This sequence belongs to the eukaryotic ribosomal protein eL20 family. In terms of assembly, part of the 50S ribosomal subunit. Binds 23S rRNA.

This chain is Large ribosomal subunit protein eL20, found in Haloarcula marismortui (strain ATCC 43049 / DSM 3752 / JCM 8966 / VKM B-1809) (Halobacterium marismortui).